A 78-amino-acid polypeptide reads, in one-letter code: Translation initiation factor IF-1, chloroplastic (78 aa).

Residues 1 to 72 (MKKQNLIEME…TKGRITYRLR (72 aa)) enclose the S1-like domain.

The protein belongs to the IF-1 family. As to quaternary structure, component of the 30S ribosomal translation pre-initiation complex which assembles on the 30S ribosome in the order IF-2 and IF-3, IF-1 and N-formylmethionyl-tRNA(fMet); mRNA recruitment can occur at any time during PIC assembly.

It is found in the plastid. The protein resides in the chloroplast. One of the essential components for the initiation of protein synthesis. Stabilizes the binding of IF-2 and IF-3 on the 30S subunit to which N-formylmethionyl-tRNA(fMet) subsequently binds. Helps modulate mRNA selection, yielding the 30S pre-initiation complex (PIC). Upon addition of the 50S ribosomal subunit IF-1, IF-2 and IF-3 are released leaving the mature 70S translation initiation complex. This is Translation initiation factor IF-1, chloroplastic from Chaetosphaeridium globosum (Charophycean green alga).